Reading from the N-terminus, the 708-residue chain is B-cell lymphoma 6 protein homolog (708 aa).

One can recognise a BTB domain in the interval 32 to 99 (TDVVIIVNRE…MYTSRLNLRE (68 aa)). Residues 303–317 (AKEEERTSSEDEISQ) show a composition bias toward basic and acidic residues. Disordered stretches follow at residues 303–371 (AKEE…KSPT) and 431–470 (PTKM…QSPL). Composition is skewed to polar residues over residues 333–370 (SPQS…TKSP) and 431–454 (PTKM…NIVN). C2H2-type zinc fingers lie at residues 520 to 543 (FFCN…LQVH), 548 to 570 (YKCD…KTVH), 576 to 598 (YRCN…TRIH), 604 to 626 (YKCE…VLIH), 632 to 654 (YPCE…LRIH), and 660 to 683 (YHCE…RQKH).

Its subcellular location is the nucleus. Its function is as follows. Transcriptional repressor mainly required for germinal center (GC) formation and antibody affinity maturation which has different mechanisms of action specific to the lineage and biological functions. Forms complexes with different corepressors and histone deacetylases to repress the transcriptional expression of different subsets of target genes. Represses its target genes by binding directly to the DNA sequence 5'-TTCCTAGAA-3' (BCL6-binding site) or indirectly by repressing the transcriptional activity of transcription factors. In GC B-cells, represses genes that function in differentiation, inflammation, apoptosis and cell cycle control, also autoregulates its transcriptional expression and up-regulates, indirectly, the expression of some genes important for GC reactions, such as AICDA, through the repression of microRNAs expression. An important function is to allow GC B-cells to proliferate very rapidly in response to T-cell dependent antigens and tolerate the physiological DNA breaks required for immunglobulin class switch recombination and somatic hypermutation without inducing a p53/TP53-dependent apoptotic response. In follicular helper CD4(+) T-cells (T(FH) cells), promotes the expression of T(FH)-related genes but inhibits the differentiation of T(H)1, T(H)2 and T(H)17 cells. Also required for the establishment and maintenance of immunological memory for both T- and B-cells. Suppresses macrophage proliferation through competition with STAT5 for STAT-binding motifs binding on certain target genes, such as CCL2 and CCND2. In response to genotoxic stress, controls cell cycle arrest in GC B-cells in both p53/TP53-dependedent and -independent manners. Besides, also controls neurogenesis through the alteration of the composition of NOTCH-dependent transcriptional complexes at selective NOTCH targets, such as HES5, including the recruitment of the deacetylase SIRT1 and resulting in an epigenetic silencing leading to neuronal differentiation. The sequence is that of B-cell lymphoma 6 protein homolog from Gallus gallus (Chicken).